A 618-amino-acid chain; its full sequence is Sodium/iodide cotransporter (618 aa).

The Extracellular segment spans residues 1–14 (MEGAEAGARATFGP). A helical transmembrane segment spans residues 15–31 (WDYGVFATMLLVSTGIG). The Cytoplasmic portion of the chain corresponds to 32–56 (LWVGLARGGQRSADDFFTGGRQLAA). A discontinuously helical membrane pass occupies residues 57 to 80 (VPVGLSLAASFMSAVQVLGVPAEA). Na(+) is bound by residues S69, V71, and Q72. Position 76 (V76) interacts with iodide. Residues 81–84 (ARYG) lie on the Extracellular side of the membrane. The helical transmembrane segment at 85 to 105 (LKFLWMCVGQLLNSLLTALLF) threads the bilayer. Residue M90 participates in iodide binding. At 106 to 130 (LPIFYRLGLTSTYQYLELRFSRAVR) the chain is on the cytoplasmic side. Residues 131–157 (LCGTLQYLVATMLYTGIVIYAPALILN) form a helical membrane-spanning segment. Y144 is a Na(+) binding site. Over 158–163 (QVTGLD) the chain is Extracellular. A helical membrane pass occupies residues 164–181 (IWASLLSTGIICTLYTTV). Over 182 to 189 (GGMKAVVW) the chain is Cytoplasmic. A helical transmembrane segment spans residues 190–208 (TDVFQVVVMLVGFWVILAR). The Extracellular portion of the chain corresponds to 209–243 (GVMLMGGPWNVLSLAQNHSRINLMDFDPDPRSRYT). The chain crosses the membrane as a discontinuously helical span at residues 244–266 (FWTFVVGGSLVWLSMYGVNQAQV). An iodide-binding site is contributed by W255. M258 is a binding site for Na(+). Over 267-278 (QRYVACHTERKA) the chain is Cytoplasmic. A helical transmembrane segment spans residues 279–301 (KLALLVNQLGLFLIVASAACCGI). Residues 302–335 (VMFVYYKDCDPLLTGRIAAPDQYMPLLVLDIFED) are Extracellular-facing. The chain crosses the membrane as a helical span at residues 336–363 (LPGVPGLFLACAYSGTLSTASTSINAMA). Residues 364-386 (AVTVEDLIKPRMPSLAPRKLVFI) lie on the Cytoplasmic side of the membrane. Residues 387–408 (SKGLSFIYGSTCLTVAALSSLL) form a helical membrane-spanning segment. Residues 409 to 411 (GGG) lie on the Extracellular side of the membrane. Residues 412 to 437 (VLQGSFTVMGVISGPLLGAFTLGMLL) form a helical membrane-spanning segment. L413 provides a ligand contact to iodide. Na(+)-binding residues include S416 and F417. Residue F417 participates in iodide binding. Over 438 to 441 (PACN) the chain is Cytoplasmic. A helical membrane pass occupies residues 442–465 (TPGVLSGLTAGLAVSLWVAVGATL). At 466 to 520 (YPPGEQTMGVLPTSAAGCTNASVLPSPPGAANTSRGIPSSGMDSGRPAFADTFYA) the chain is on the extracellular side. N485 and N497 each carry an N-linked (GlcNAc...) asparagine glycan. Residues 521–545 (VSYLYYGALGTLTTMLCGALISYLT) form a helical membrane-spanning segment. Residues 546-618 (GPTKRSSLGP…YLGHDVETNL (73 aa)) lie on the Cytoplasmic side of the membrane. S551 is modified (phosphoserine; by PKA). Over residues 571–587 (PKEDTTTLEDSLVKGPE) the composition is skewed to basic and acidic residues. Residues 571 to 618 (PKEDTTTLEDSLVKGPEDIPAATKKPPGFRPEAETHPLYLGHDVETNL) form a disordered region.

It belongs to the sodium:solute symporter (SSF) (TC 2.A.21) family. As to quaternary structure, monomer. Glycosylated.

Its subcellular location is the cell membrane. The protein resides in the cytoplasm. It carries out the reaction iodide(out) + 2 Na(+)(out) = iodide(in) + 2 Na(+)(in). The catalysed reaction is chlorate(out) + 2 Na(+)(out) = chlorate(in) + 2 Na(+)(in). The enzyme catalyses thiocyanate(out) + 2 Na(+)(out) = thiocyanate(in) + 2 Na(+)(in). It catalyses the reaction nitrate(out) + 2 Na(+)(out) = nitrate(in) + 2 Na(+)(in). It carries out the reaction selenocyanate(out) + 2 Na(+)(out) = selenocyanate(in) + 2 Na(+)(in). With respect to regulation, perchlorate inhibits iodide transport activity. Oxyanions inhibit iodide transport activity by blocking the binding sites for iodide and one of the sodium ions. Its function is as follows. Sodium:iodide symporter that mediates the transport of iodide into the thyroid gland. Can also mediate the transport of chlorate, thiocynate, nitrate and selenocynate. The protein is Sodium/iodide cotransporter (Slc5a5) of Mus musculus (Mouse).